The following is a 456-amino-acid chain: Signal transduction histidine-protein kinase ArlS (456 aa).

2 helical membrane-spanning segments follow: residues 13 to 33 (LITTLITFTTILLFCLIIIFF) and 157 to 177 (IVALAFGLIATIITAGVSYIF). The 54-residue stretch at 179 to 232 (SQITKPIVTMSNKMNQIRRDGFQNKLELTTNYEETDNLIDTFNEMMYQIEESFN) folds into the HAMP domain. Residues 240–456 (DASHELRTPL…TFKISFPVLN (217 aa)) form the Histidine kinase domain. A Phosphohistidine; by autocatalysis modification is found at His-243.

Post-translationally, autophosphorylated.

The protein localises to the cell membrane. The catalysed reaction is ATP + protein L-histidine = ADP + protein N-phospho-L-histidine.. Its function is as follows. Member of the two-component regulatory system ArlS/ArlR. ArlS probably functions as a sensor protein kinase which is autophosphorylated at a histidine residue and transfers its phosphate group to ArlR. This chain is Signal transduction histidine-protein kinase ArlS (arlS), found in Staphylococcus epidermidis (strain ATCC 12228 / FDA PCI 1200).